Here is a 104-residue protein sequence, read N- to C-terminus: SOSS complex subunit C (104 aa).

An N-acetylalanine modification is found at alanine 2. The residue at position 50 (serine 50) is a Phosphoserine.

It belongs to the SOSS-C family. Component of the SOSS complex, composed of SOSS-B (SOSS-B1/NABP2 or SOSS-B2/NABP1), SOSS-A/INTS3 and SOSS-C/INIP. SOSS complexes containing SOSS-B1/NABP2 are more abundant than complexes containing SOSS-B2/NABP1. Interacts with INTS3; the interaction is direct.

Its subcellular location is the nucleus. Its function is as follows. Component of the SOSS complex, a multiprotein complex that functions downstream of the MRN complex to promote DNA repair and G2/M checkpoint. The SOSS complex associates with single-stranded DNA at DNA lesions and influences diverse endpoints in the cellular DNA damage response including cell-cycle checkpoint activation, recombinational repair and maintenance of genomic stability. Required for efficient homologous recombination-dependent repair of double-strand breaks (DSBs) and ATM-dependent signaling pathways. In Homo sapiens (Human), this protein is SOSS complex subunit C (INIP).